The primary structure comprises 856 residues: Mechanosensitive ion channel protein 6 (856 aa).

Disordered stretches follow at residues 45–86 (GEGN…DPPT) and 116–226 (RGLT…PFAA). Basic and acidic residues-rich tracts occupy residues 70–85 (QQKD…EDPP) and 129–140 (TKRDPVGRRDSR). The span at 155–168 (SGNNAPIQRSSSTL) shows a compositional bias: polar residues. At S211 the chain carries Phosphoserine. The segment covering 217–226 (EEEEDDPFAA) has biased composition (acidic residues). Transmembrane regions (helical) follow at residues 242 to 262 (IVLE…TLAI), 283 to 303 (LVLI…VFFI), 323 to 343 (AVQN…LFDE), and 360 to 380 (IFVC…LVKV). The residue at position 462 (S462) is a Phosphoserine. Transmembrane regions (helical) follow at residues 615–635 (MVNI…LGIT) and 651–671 (AFIF…LFVI).

This sequence belongs to the MscS (TC 1.A.23) family.

It localises to the membrane. In terms of biological role, mechanosensitive channel that opens in response to stretch forces in the membrane lipid bilayer. The polypeptide is Mechanosensitive ion channel protein 6 (MSL6) (Arabidopsis thaliana (Mouse-ear cress)).